Here is a 451-residue protein sequence, read N- to C-terminus: Probable DNA polymerase delta small subunit (451 aa).

Belongs to the DNA polymerase delta/II small subunit family. Heterodimer with subunits of 125 kDa and 50 kDa.

The protein localises to the nucleus. The catalysed reaction is DNA(n) + a 2'-deoxyribonucleoside 5'-triphosphate = DNA(n+1) + diphosphate. In terms of biological role, the function of the small subunit is not yet clear. This chain is Probable DNA polymerase delta small subunit, found in Caenorhabditis elegans.